Consider the following 427-residue polypeptide: Mitochondrial distribution and morphology protein 10 (427 aa).

Residues 393–414 (SSYANSQATAGAQGSSGGPPTS) show a composition bias toward low complexity. The segment at 393–427 (SSYANSQATAGAQGSSGGPPTSYWRGVGVSVSYSS) is disordered.

This sequence belongs to the MDM10 family. Component of the ER-mitochondria encounter structure (ERMES) or MDM complex, composed of mmm1, mdm10, mdm12 and mdm34. Associates with the mitochondrial outer membrane sorting assembly machinery SAM(core) complex.

The protein resides in the mitochondrion outer membrane. In terms of biological role, component of the ERMES/MDM complex, which serves as a molecular tether to connect the endoplasmic reticulum and mitochondria. Components of this complex are involved in the control of mitochondrial shape and protein biogenesis and may function in phospholipid exchange. mdm10 is involved in the late assembly steps of the general translocase of the mitochondrial outer membrane (TOM complex). Functions in the tom40-specific route of the assembly of outer membrane beta-barrel proteins, including the association of tom40 with the receptor tom22 and small TOM proteins. Can associate with the SAM(core) complex as well as the mdm12-mmm1 complex, both involved in late steps of the major beta-barrel assembly pathway, that is responsible for biogenesis of all outer membrane beta-barrel proteins. May act as a switch that shuttles between both complexes and channels precursor proteins into the tom40-specific pathway. Plays a role in mitochondrial morphology and in the inheritance of mitochondria. This chain is Mitochondrial distribution and morphology protein 10 (mdmB), found in Emericella nidulans (strain FGSC A4 / ATCC 38163 / CBS 112.46 / NRRL 194 / M139) (Aspergillus nidulans).